A 501-amino-acid chain; its full sequence is Symplectin (501 aa).

The region spanning 20-287 is the CN hydrolase domain; sequence PKTDMETREE…SKLLVAEILP (268 aa). The Proton acceptor role is filled by glutamate 60. The Proton donor role is filled by lysine 163. Cysteine 196 serves as the catalytic Nucleophile. Cysteine 390 bears the S-(coelenterazin-3a-yl)cysteine mark.

Belongs to the carbon-nitrogen hydrolase superfamily. BTD/VNN family. Photogenic gland (at protein level).

Functionally, monovalent ion-dependent bioluminescence photoprotein. Displays an emission peak at 470 nm (blue light). Trace amounts of monovalent ion trigger the intramolecular oxidation of the chromophore, didehydrocoelenterazine, with the emission of light. In Sthenoteuthis oualaniensis (Purpleback flying squid), this protein is Symplectin.